Consider the following 358-residue polypeptide: UDP-N-acetylglucosamine--N-acetylmuramyl-(pentapeptide) pyrophosphoryl-undecaprenol N-acetylglucosamine transferase (358 aa).

UDP-N-acetyl-alpha-D-glucosamine contacts are provided by serine 197 and glutamine 288.

It belongs to the glycosyltransferase 28 family. MurG subfamily.

It localises to the cell membrane. It catalyses the reaction Mur2Ac(oyl-L-Ala-gamma-D-Glu-L-Lys-D-Ala-D-Ala)-di-trans,octa-cis-undecaprenyl diphosphate + UDP-N-acetyl-alpha-D-glucosamine = beta-D-GlcNAc-(1-&gt;4)-Mur2Ac(oyl-L-Ala-gamma-D-Glu-L-Lys-D-Ala-D-Ala)-di-trans,octa-cis-undecaprenyl diphosphate + UDP + H(+). The protein operates within cell wall biogenesis; peptidoglycan biosynthesis. Cell wall formation. Catalyzes the transfer of a GlcNAc subunit on undecaprenyl-pyrophosphoryl-MurNAc-pentapeptide (lipid intermediate I) to form undecaprenyl-pyrophosphoryl-MurNAc-(pentapeptide)GlcNAc (lipid intermediate II). The sequence is that of UDP-N-acetylglucosamine--N-acetylmuramyl-(pentapeptide) pyrophosphoryl-undecaprenol N-acetylglucosamine transferase from Streptococcus agalactiae serotype Ia (strain ATCC 27591 / A909 / CDC SS700).